The following is a 339-amino-acid chain: Homeobox protein Hox-D13 (339 aa).

The disordered stretch occupies residues 1–33 (MSRSGTWDMDGLRADGGAAGAAPASSSSSVAAP). The span at 20-33 (GAAPASSSSSVAAP) shows a compositional bias: low complexity. A DNA-binding region (homeobox) is located at residues 272-331 (GRKKRVPYTKLQLKELENEYAINKFINKDKRRRISAATNLSERQVTIWFQNRRVKDKKIV).

The protein belongs to the Abd-B homeobox family.

Its subcellular location is the nucleus. Its function is as follows. Sequence-specific transcription factor that binds gene promoters and activates their transcription. Part of a developmental regulatory system that provides cells with specific positional identities on the anterior-posterior axis. This is Homeobox protein Hox-D13 (Hoxd13) from Mus musculus (Mouse).